We begin with the raw amino-acid sequence, 607 residues long: Elongation factor 4 (607 aa).

Residues 11-193 (EKIRNFSIIA…QIVEKVPAPT (183 aa)) form the tr-type G domain. GTP is bound by residues 23–28 (DHGKST) and 140–143 (NKID).

This sequence belongs to the TRAFAC class translation factor GTPase superfamily. Classic translation factor GTPase family. LepA subfamily.

It is found in the cell membrane. The catalysed reaction is GTP + H2O = GDP + phosphate + H(+). In terms of biological role, required for accurate and efficient protein synthesis under certain stress conditions. May act as a fidelity factor of the translation reaction, by catalyzing a one-codon backward translocation of tRNAs on improperly translocated ribosomes. Back-translocation proceeds from a post-translocation (POST) complex to a pre-translocation (PRE) complex, thus giving elongation factor G a second chance to translocate the tRNAs correctly. Binds to ribosomes in a GTP-dependent manner. This Streptococcus pneumoniae serotype 19F (strain G54) protein is Elongation factor 4.